The primary structure comprises 218 residues: MKFFIDTANLEQIQEAYDLGVLDGVTTNPSLMAKEGIKGTENQREHYIKICKIVNADVSAEVIATDYEGMIREGEELAALNPHIVVKVPCIADGIKAIKYFTEKGIRTNCTLVFSVGQALLAAKAGATYVSPFVGRLDDICEDGVGLVGDIVRMYRTYDYKTQVLAASIRNTKHIIECVEVGADVATCPLSAIKGLLNHPLTDSGLKKFLEDYKKVNG.

The active-site Schiff-base intermediate with substrate is Lys-87.

The protein belongs to the transaldolase family. Type 3B subfamily.

Its subcellular location is the cytoplasm. The enzyme catalyses D-sedoheptulose 7-phosphate + D-glyceraldehyde 3-phosphate = D-erythrose 4-phosphate + beta-D-fructose 6-phosphate. It participates in carbohydrate degradation; pentose phosphate pathway; D-glyceraldehyde 3-phosphate and beta-D-fructose 6-phosphate from D-ribose 5-phosphate and D-xylulose 5-phosphate (non-oxidative stage): step 2/3. In terms of biological role, transaldolase is important for the balance of metabolites in the pentose-phosphate pathway. The sequence is that of Probable transaldolase from Bacteroides thetaiotaomicron (strain ATCC 29148 / DSM 2079 / JCM 5827 / CCUG 10774 / NCTC 10582 / VPI-5482 / E50).